We begin with the raw amino-acid sequence, 330 residues long: Aspartate--ammonia ligase (330 aa).

The protein belongs to the class-II aminoacyl-tRNA synthetase family. AsnA subfamily.

The protein resides in the cytoplasm. The enzyme catalyses L-aspartate + NH4(+) + ATP = L-asparagine + AMP + diphosphate + H(+). It functions in the pathway amino-acid biosynthesis; L-asparagine biosynthesis; L-asparagine from L-aspartate (ammonia route): step 1/1. This is Aspartate--ammonia ligase from Actinobacillus succinogenes (strain ATCC 55618 / DSM 22257 / CCUG 43843 / 130Z).